The sequence spans 148 residues: MGLEKSLILLPLLVLVFGWVQPSLGKETSAQKFERQHMDSTGSSSSPTYCNQMMKRRNMTQGYCKPVNTFVHKPLANVQAVCSQKNVTCKNGNSNCYKSHSALPITDCRLKGNSKYPNCDYQTNQLQKHIIVACEGSPFVPVHFDASV.

An N-terminal signal peptide occupies residues 1 to 25 (MGLEKSLILLPLLVLVFGWVQPSLG). Substrate-binding residues include K32 and R35. The Proton acceptor role is filled by H37. 4 disulfide bridges follow: C50-C108, C64-C119, C82-C134, and C89-C96. N58 carries an N-linked (GlcNAc...) asparagine glycan. 65 to 69 (KPVNT) contacts substrate. N86 is a glycosylation site (N-linked (GlcNAc...) asparagine). The substrate site is built by K90 and R109. The active-site Proton donor is H143.

The protein belongs to the pancreatic ribonuclease family. In terms of assembly, monomer. Interacts with and forms tight 1:1 complexes with RNH1. Dimerization of two such complexes may occur. Interaction with RNH1 inhibits this protein. Pancreas.

It localises to the secreted. It carries out the reaction an [RNA] containing cytidine + H2O = an [RNA]-3'-cytidine-3'-phosphate + a 5'-hydroxy-ribonucleotide-3'-[RNA].. It catalyses the reaction an [RNA] containing uridine + H2O = an [RNA]-3'-uridine-3'-phosphate + a 5'-hydroxy-ribonucleotide-3'-[RNA].. Its function is as follows. Endonuclease that catalyzes the cleavage of RNA on the 3' side of pyrimidine nucleotides. Acts on single-stranded and double-stranded RNA. The polypeptide is Ribonuclease pancreatic (RNASE1) (Myodes glareolus (Bank vole)).